Consider the following 207-residue polypeptide: Cytochrome c biogenesis ATP-binding export protein CcmA 1 (207 aa).

The ABC transporter domain occupies 6–207 (LEALDLAGVR…KTSQTVRMGA (202 aa)). 38–45 (GENGSGKT) contributes to the ATP binding site.

The protein belongs to the ABC transporter superfamily. CcmA exporter (TC 3.A.1.107) family. As to quaternary structure, the complex is composed of two ATP-binding proteins (CcmA) and two transmembrane proteins (CcmB).

The protein resides in the cell inner membrane. It carries out the reaction heme b(in) + ATP + H2O = heme b(out) + ADP + phosphate + H(+). In terms of biological role, part of the ABC transporter complex CcmAB involved in the biogenesis of c-type cytochromes; once thought to export heme, this seems not to be the case, but its exact role is uncertain. Responsible for energy coupling to the transport system. The protein is Cytochrome c biogenesis ATP-binding export protein CcmA 1 of Cupriavidus metallidurans (strain ATCC 43123 / DSM 2839 / NBRC 102507 / CH34) (Ralstonia metallidurans).